The following is a 235-amino-acid chain: Protein RESISTANCE TO PHYTOPHTHORA 1, chloroplastic (235 aa).

The transit peptide at 1-43 directs the protein to the chloroplast; that stretch reads MNSATTMSASVLNYQILKFFPPQKNGFLKSPLIRGKICRFCVS. Over residues 53–66 the composition is skewed to basic and acidic residues; sequence VIEDPKEETQEKSD. Residues 53-92 are disordered; that stretch reads VIEDPKEETQEKSDGVIVNSTEEEEERSGENSTSTGPSTV. 4 consecutive transmembrane segments (helical) span residues 131–151, 158–178, 188–208, and 211–231; these read FEVQ…NLIF, IWRL…LRAR, LNYL…FLKS, and VVWS…LGWL.

It localises to the plastid. The protein localises to the chloroplast. It is found in the membrane. Plays a positive role in the immune response to the oomycetes P.infestans, including induced oxidative burst and enhanced expression of defense-related genes. This is Protein RESISTANCE TO PHYTOPHTHORA 1, chloroplastic from Solanum tuberosum (Potato).